The sequence spans 757 residues: Zinc finger CCCH domain-containing protein 5 (757 aa).

A disordered region spans residues 1 to 127 (MEQANEKEEE…REEEERRWKD (127 aa)). Residues 13–35 (HEEAAGEKESFEESKEKAAEMSR) are compositionally biased toward basic and acidic residues. Basic residues predominate over residues 36-50 (KEKRKAMKKLKRKQV). Basic and acidic residues predominate over residues 51-127 (RKEIAAKERE…REEEERRWKD (77 aa)). The C3H1-type 1 zinc finger occupies 240 to 268 (EQDKAHCPFHLKTGACRFGQRCSRVHFYP). One can recognise an RRM domain in the interval 295–372 (YTDEEAELCY…KQVNCEFVNI (78 aa)). The C3H1-type 2 zinc-finger motif lies at 374-404 (RWKVAICGEYMKSRLKTCSRGSACNFIHCFR). Positions 441–757 (HESSGSLNDS…EEEIERWRPV (317 aa)) are disordered. A compositionally biased stretch (polar residues) spans 444-455 (SGSLNDSISDLS). Over residues 487-546 (YHGDTQDSTREDKLRRHAENCHDGDDSPSRDGSLEREMYKERRYAKDTLHRDSRWSEHSP) the composition is skewed to basic and acidic residues. 2 stretches are compositionally biased toward basic residues: residues 547–557 (GHRVGRKRIHG) and 600–609 (KTHRSSRKHS). Composition is skewed to basic and acidic residues over residues 610–634 (REGSSADKEEGHEHDRVHTVSDKSH), 644–672 (RSSSRYSHEEDSTESRHHQHKESDKKRSV), and 681–721 (SDKD…ETHK). Over residues 722–733 (ERRHRHRKRRRT) the composition is skewed to basic residues.

The polypeptide is Zinc finger CCCH domain-containing protein 5 (Arabidopsis thaliana (Mouse-ear cress)).